Reading from the N-terminus, the 281-residue chain is Ribosomal protein L11 methyltransferase (281 aa).

The S-adenosyl-L-methionine site is built by threonine 131, glycine 152, aspartate 174, and asparagine 217.

This sequence belongs to the methyltransferase superfamily. PrmA family.

It is found in the cytoplasm. It catalyses the reaction L-lysyl-[protein] + 3 S-adenosyl-L-methionine = N(6),N(6),N(6)-trimethyl-L-lysyl-[protein] + 3 S-adenosyl-L-homocysteine + 3 H(+). Functionally, methylates ribosomal protein L11. The polypeptide is Ribosomal protein L11 methyltransferase (Phocaeicola vulgatus (strain ATCC 8482 / DSM 1447 / JCM 5826 / CCUG 4940 / NBRC 14291 / NCTC 11154) (Bacteroides vulgatus)).